The following is a 147-amino-acid chain: Hemoglobin subunit beta (147 aa).

At V2 the chain carries N-acetylvaline. Positions H3–H147 constitute a Globin domain. S45 bears the Phosphoserine mark. The residue at position 60 (K60) is an N6-acetyllysine. Heme b is bound at residue H64. K83 is subject to N6-acetyllysine. Position 93 (H93) interacts with heme b. Residue C94 is modified to S-nitrosocysteine.

The protein belongs to the globin family. Heterotetramer of two alpha chains and two beta chains. As to expression, red blood cells.

Its function is as follows. Involved in oxygen transport from the lung to the various peripheral tissues. The sequence is that of Hemoglobin subunit beta (HBB) from Camelus dromedarius (Dromedary).